Here is a 90-residue protein sequence, read N- to C-terminus: [Leu8]-phyllolitorin (90 aa).

The signal sequence occupies residues 1 to 30 (MSAVPFTRVLLISGFLAHLLLSTFVTLTVC). The propeptide occupies 31–48 (KEVTEESDDLSKRNVLQR). Position 49 is a pyrrolidone carboxylic acid (glutamine 49). At methionine 57 the chain carries Methionine amide. A propeptide spanning residues 61–90 (SLENTNRRSDEDMEISALFRGSPLKVKRSD) is cleaved from the precursor.

It belongs to the bombesin/neuromedin-B/ranatensin family. In terms of tissue distribution, expressed by the skin glands.

It is found in the secreted. This Phyllomedusa sauvagei (Sauvage's leaf frog) protein is [Leu8]-phyllolitorin.